The following is a 342-amino-acid chain: Pre-mRNA-splicing factor 18 (342 aa).

Belongs to the PRP18 family. As to quaternary structure, interacts with the spliceosome. Part of a complex containing U4/U6 snRNPs.

It localises to the nucleus speckle. In terms of biological role, participates in the second step of pre-mRNA splicing. The polypeptide is Pre-mRNA-splicing factor 18 (prpf18) (Xenopus laevis (African clawed frog)).